A 478-amino-acid chain; its full sequence is Trigger factor (478 aa).

A disordered region spans residues Met1–Gln41. The PPIase FKBP-type domain occupies Gly197–Pro279. The segment covering Val455–Asn472 has biased composition (basic and acidic residues). The disordered stretch occupies residues Val455 to Thr478.

It belongs to the FKBP-type PPIase family. Tig subfamily.

It localises to the cytoplasm. The enzyme catalyses [protein]-peptidylproline (omega=180) = [protein]-peptidylproline (omega=0). Involved in protein export. Acts as a chaperone by maintaining the newly synthesized protein in an open conformation. Functions as a peptidyl-prolyl cis-trans isomerase. This chain is Trigger factor, found in Aquifex aeolicus (strain VF5).